A 524-amino-acid chain; its full sequence is MVVLAASIISKSGKALVSRQFVDMSRIRIEGLLAAFPKLVGTGKQHTYVETENVRYVYQPIEGLYLLLITNKQSNILEDLDTLRLLSKLVPEYSPSLDEEGVCKTAFELIFAFDEAISLGNKENVTVQQVKQYCEMESHEEKAHKLMMQSKINETRDVMKKKASELDKMRMERGKLDKGGYSSISGPRVIEKTFNDMSITGSGFGSGSGLGGLGMDMDSFASKPKGGRPSAAATAPGKGLGMKLGKTQKTNQFLESLKAEGEVILEDVQPSSVQSRASPLPPSDPVTVTIEEKLNVTVKRDGGVNNFDVQGTLALQVLNDADGFIQLQIENQDVPGLSFKTHPNINKDLFNSQQVVGAKDPNRPFPSGQNETPLVKWRIQGMDESSLPLSVNCWPSVSGSETYVNIEYEAAEMFDLHNVVISIPLPALREAPSVRQIDGEWKYDSRNSVLEWSILLIDQSNRSGSMEFVVPPADPSTFFPISIGFSASSTFSDLKVTGIRPLKDGNPPKYSQRARLVAANYQVV.

Residues 215–244 are disordered; the sequence is MDMDSFASKPKGGRPSAAATAPGKGLGMKL. In terms of domain architecture, MHD spans 283-524; the sequence is SDPVTVTIEE…RLVAANYQVV (242 aa).

It belongs to the adaptor complexes medium subunit family. Delta-COP subfamily. In terms of assembly, oligomeric complex that consists of at least the alpha, beta, beta', gamma, delta, epsilon and zeta subunits.

The protein resides in the cytoplasm. It is found in the golgi apparatus membrane. The protein localises to the cytoplasmic vesicle. Its subcellular location is the COPI-coated vesicle membrane. The coatomer is a cytosolic protein complex that binds to dilysine motifs and reversibly associates with Golgi non-clathrin-coated vesicles, which further mediate biosynthetic protein transport from the ER, via the Golgi up to the trans Golgi network. Coatomer complex is required for budding from Golgi membranes, and is essential for the retrograde Golgi-to-ER transport of dilysine-tagged proteins. The chain is Coatomer subunit delta-1 from Oryza sativa subsp. japonica (Rice).